The following is a 314-amino-acid chain: Methionyl-tRNA formyltransferase (314 aa).

110-113 (SLLP) contributes to the (6S)-5,6,7,8-tetrahydrofolate binding site.

The protein belongs to the Fmt family.

The enzyme catalyses L-methionyl-tRNA(fMet) + (6R)-10-formyltetrahydrofolate = N-formyl-L-methionyl-tRNA(fMet) + (6S)-5,6,7,8-tetrahydrofolate + H(+). In terms of biological role, attaches a formyl group to the free amino group of methionyl-tRNA(fMet). The formyl group appears to play a dual role in the initiator identity of N-formylmethionyl-tRNA by promoting its recognition by IF2 and preventing the misappropriation of this tRNA by the elongation apparatus. The protein is Methionyl-tRNA formyltransferase of Bacillus cytotoxicus (strain DSM 22905 / CIP 110041 / 391-98 / NVH 391-98).